Consider the following 243-residue polypeptide: UDP-2,3-diacylglucosamine hydrolase (243 aa).

The Mn(2+) site is built by aspartate 8, histidine 10, aspartate 41, asparagine 79, and histidine 114. Substrate is bound at residue 79-80 (NR). The substrate site is built by aspartate 122, lysine 164, lysine 167, and histidine 195. Positions 195 and 197 each coordinate Mn(2+).

This sequence belongs to the LpxH family. Requires Mn(2+) as cofactor.

It localises to the cell inner membrane. The catalysed reaction is UDP-2-N,3-O-bis[(3R)-3-hydroxytetradecanoyl]-alpha-D-glucosamine + H2O = 2-N,3-O-bis[(3R)-3-hydroxytetradecanoyl]-alpha-D-glucosaminyl 1-phosphate + UMP + 2 H(+). It participates in glycolipid biosynthesis; lipid IV(A) biosynthesis; lipid IV(A) from (3R)-3-hydroxytetradecanoyl-[acyl-carrier-protein] and UDP-N-acetyl-alpha-D-glucosamine: step 4/6. Its function is as follows. Hydrolyzes the pyrophosphate bond of UDP-2,3-diacylglucosamine to yield 2,3-diacylglucosamine 1-phosphate (lipid X) and UMP by catalyzing the attack of water at the alpha-P atom. Involved in the biosynthesis of lipid A, a phosphorylated glycolipid that anchors the lipopolysaccharide to the outer membrane of the cell. This is UDP-2,3-diacylglucosamine hydrolase from Vibrio vulnificus (strain CMCP6).